Consider the following 161-residue polypeptide: MGNKIAVIPGTFDPITNGHLDIIERAAKIFDVLYVSVLNNSSKKPLFTVEERMEMIKQVTAHLPNVHVESASGLTVDYAAKRGATAIVRGLRAVSDFEYEMQIASMNRTLNADIETFFVMTNTKYSFLSSSMVKEVAQYQGDIRELVPEVVNKAVKAKFNK.

Threonine 11 provides a ligand contact to substrate. Residues 11 to 12 (TF) and histidine 19 each bind ATP. The substrate site is built by lysine 43, threonine 75, and arginine 89. ATP-binding positions include 90-92 (GLR), glutamate 100, and 125-131 (YSFLSSS).

It belongs to the bacterial CoaD family. In terms of assembly, homohexamer. The cofactor is Mg(2+).

The protein localises to the cytoplasm. It carries out the reaction (R)-4'-phosphopantetheine + ATP + H(+) = 3'-dephospho-CoA + diphosphate. It participates in cofactor biosynthesis; coenzyme A biosynthesis; CoA from (R)-pantothenate: step 4/5. Its function is as follows. Reversibly transfers an adenylyl group from ATP to 4'-phosphopantetheine, yielding dephospho-CoA (dPCoA) and pyrophosphate. The chain is Phosphopantetheine adenylyltransferase from Listeria innocua serovar 6a (strain ATCC BAA-680 / CLIP 11262).